Consider the following 1036-residue polypeptide: Integrin alpha-9 (1036 aa).

The N-terminal stretch at 1–28 is a signal peptide; sequence MGGPAAARTGAGGLRALLLALVAAGVPA. At 29–981 the chain is on the extracellular side; that stretch reads GAYNLDAQRP…NLEPRGYVVG (953 aa). FG-GAP repeat units lie at residues 36 to 97, 109 to 175, 183 to 233, 234 to 290, 291 to 350, 352 to 409, and 412 to 475; these read QRPV…PDRR, RGAP…AKGK, EYKK…NTYF, KLND…SGTL, IKIF…GALE, QLTL…GIVP, and SMKL…LPGS. 3 cysteine pairs are disulfide-bonded: Cys88-Cys98, Cys143-Cys163, and Cys180-Cys195. The N-linked (GlcNAc...) asparagine glycan is linked to Asn226. Positions 313, 315, 317, 321, 374, 376, 378, 382, 436, 438, 440, and 444 each coordinate Ca(2+). Residues Cys483 and Cys492 are joined by a disulfide bond. Asn494 and Asn515 each carry an N-linked (GlcNAc...) asparagine glycan. 3 cysteine pairs are disulfide-bonded: Cys498-Cys556, Cys621-Cys626, and Cys697-Cys707. N-linked (GlcNAc...) asparagine glycosylation occurs at Asn808. 2 disulfides stabilise this stretch: Cys856-Cys892 and Cys899-Cys904. A helical membrane pass occupies residues 982–1002; the sequence is WIIAISLLVGILIFLLLAVLL. The Cytoplasmic segment spans residues 1003–1036; that stretch reads WKMGFFRRRYKEIIEAEKNRKENEDGWDWVQKNQ. The short motif at 1006 to 1010 is the GFFKR motif element; the sequence is GFFRR.

This sequence belongs to the integrin alpha chain family. In terms of assembly, heterodimer of an alpha and a beta subunit. Alpha-9 (ITGA9) associates with beta-1 (ITGB1). Integrin ITGA9:ITGB1 interacts with FBLN5 (via N-terminus). Integrin ITGA9:ITGB1 interacts with SPP1/OPN (via N-terminus). Integrin ITGA9:ITGB1 interacts with TNC/TNFN3 (via the 3rd Fibronectin type-III domain). Integrin ITGA9:ITGB1 interacts with SVEP1/polydom (via Sushi domain 21); thereby inhibits Ca(2+) intracellular signaling and as a result represses vasocontraction. As to expression, expressed in the media layer of the arterial wall (at protein level). Expressed in the airway epithelium, skeletal muscle, basal keratincytes, the basal epithelium of the cornea, hepatocytes, giant cells in the spleen and smooth muscle of the stomach, duodenum and veins (at protein level).

The protein localises to the membrane. Its function is as follows. Integrin alpha-9/beta-1 (ITGA9:ITGB1) is a receptor for VCAM1, cytotactin and osteopontin. It recognizes the sequence A-E-I-D-G-I-E-L in cytotactin. ITGA9:ITGB1 may play a crucial role in SVEP1/polydom-mediated myoblast cell adhesion. Integrin ITGA9:ITGB1 represses PRKCA-mediated L-type voltage-gated channel Ca(2+) influx and ROCK-mediated calcium sensitivity in vascular smooth muscle cells via its interaction with SVEP1, thereby inhibiting vasocontraction. In Mus musculus (Mouse), this protein is Integrin alpha-9.